The chain runs to 537 residues: Tegument protein BRRF2 (537 aa).

Disordered regions lie at residues 325–474 (LALP…EAQD) and 486–537 (GLRV…LSVI). The segment covering 334-347 (KPQQTCSQLTSRGN) has biased composition (polar residues). Low complexity predominate over residues 423–441 (SSQAAPSSSSVAPVASLSG). Positions 492–517 (DEDEDGSEDGEFSDLDLSDSDHEGDE) are enriched in acidic residues.

It belongs to the lymphocryptovirus BRRF2 family.

It localises to the virion tegument. The polypeptide is Tegument protein BRRF2 (Homo sapiens (Human)).